The sequence spans 232 residues: Orotidine 5'-phosphate decarboxylase (232 aa).

Residues D13, K35, 62–71 (DLKFHDIPNT), T121, R182, Q191, G211, and R212 contribute to the substrate site. K64 functions as the Proton donor in the catalytic mechanism.

This sequence belongs to the OMP decarboxylase family. Type 1 subfamily. In terms of assembly, homodimer.

It catalyses the reaction orotidine 5'-phosphate + H(+) = UMP + CO2. The protein operates within pyrimidine metabolism; UMP biosynthesis via de novo pathway; UMP from orotate: step 2/2. Its function is as follows. Catalyzes the decarboxylation of orotidine 5'-monophosphate (OMP) to uridine 5'-monophosphate (UMP). The protein is Orotidine 5'-phosphate decarboxylase of Acinetobacter baumannii (strain ACICU).